The primary structure comprises 609 residues: Dihydroxy-acid dehydratase (609 aa).

Asp-81 serves as a coordination point for Mg(2+). Cys-122 contributes to the [2Fe-2S] cluster binding site. Mg(2+) contacts are provided by Asp-123 and Lys-124. Residue Lys-124 is modified to N6-carboxylysine. [2Fe-2S] cluster is bound at residue Cys-195. Position 491 (Glu-491) interacts with Mg(2+). The active-site Proton acceptor is the Ser-517.

The protein belongs to the IlvD/Edd family. In terms of assembly, homodimer. The cofactor is [2Fe-2S] cluster. Mg(2+) serves as cofactor.

The enzyme catalyses (2R)-2,3-dihydroxy-3-methylbutanoate = 3-methyl-2-oxobutanoate + H2O. It catalyses the reaction (2R,3R)-2,3-dihydroxy-3-methylpentanoate = (S)-3-methyl-2-oxopentanoate + H2O. It functions in the pathway amino-acid biosynthesis; L-isoleucine biosynthesis; L-isoleucine from 2-oxobutanoate: step 3/4. It participates in amino-acid biosynthesis; L-valine biosynthesis; L-valine from pyruvate: step 3/4. Functions in the biosynthesis of branched-chain amino acids. Catalyzes the dehydration of (2R,3R)-2,3-dihydroxy-3-methylpentanoate (2,3-dihydroxy-3-methylvalerate) into 2-oxo-3-methylpentanoate (2-oxo-3-methylvalerate) and of (2R)-2,3-dihydroxy-3-methylbutanoate (2,3-dihydroxyisovalerate) into 2-oxo-3-methylbutanoate (2-oxoisovalerate), the penultimate precursor to L-isoleucine and L-valine, respectively. The chain is Dihydroxy-acid dehydratase from Acinetobacter baumannii (strain AB0057).